The sequence spans 736 residues: Gingipain R2 (736 aa).

The first 24 residues, 1-24 (MKKNFSRIVSIVAFSSLLGGMAFA), serve as a signal peptide directing secretion. Residues 25–229 (QPAERGRNPQ…SVFMNYEATR (205 aa)) constitute a propeptide that is removed on maturation. Residues D307, V329, D332, Y334, E336, E390, and H395 each contribute to the Ca(2+) site. The Proton donor role is filled by H440. C473 acts as the Nucleophile in catalysis. 8 residues coordinate Ca(2+): F478, E487, D521, E522, E525, H531, D613, and E639.

The protein belongs to the peptidase C25 family.

It localises to the secreted. The enzyme catalyses Hydrolysis of proteins and small molecule substrates, with a preference for Arg in P1.. With respect to regulation, inhibited by human histatin-3 1/24 (histatin-5). Functionally, thiol protease. Acts synergistically with RgpA to catalyze the maturation of fimbrial subunits, such as FimA. Its proteolytic activity is a major factor in both periodontal tissue destruction and in evasion of host defense mechanisms. This is Gingipain R2 (rgpB) from Porphyromonas gingivalis (strain ATCC BAA-308 / W83).